Reading from the N-terminus, the 110-residue chain is Phosphoribosyl-ATP pyrophosphatase (110 aa).

This sequence belongs to the PRA-PH family.

The protein localises to the cytoplasm. It catalyses the reaction 1-(5-phospho-beta-D-ribosyl)-ATP + H2O = 1-(5-phospho-beta-D-ribosyl)-5'-AMP + diphosphate + H(+). It participates in amino-acid biosynthesis; L-histidine biosynthesis; L-histidine from 5-phospho-alpha-D-ribose 1-diphosphate: step 2/9. The protein is Phosphoribosyl-ATP pyrophosphatase (hisE) of Clostridium acetobutylicum (strain ATCC 824 / DSM 792 / JCM 1419 / IAM 19013 / LMG 5710 / NBRC 13948 / NRRL B-527 / VKM B-1787 / 2291 / W).